We begin with the raw amino-acid sequence, 75 residues long: CDC42 small effector protein 2-B (75 aa).

2 S-palmitoyl cysteine lipidation sites follow: C10 and C11. Residues 29–42 (IGEPMNFVHTAHVG) form the CRIB domain.

It belongs to the CDC42SE/SPEC family.

It localises to the cytoplasm. Its subcellular location is the cytoskeleton. It is found in the cell membrane. Functionally, probably involved in the organization of the actin cytoskeleton by acting downstream of CDC42, inducing actin filament assembly. This Xenopus laevis (African clawed frog) protein is CDC42 small effector protein 2-B (cdc42se2-b).